Reading from the N-terminus, the 345-residue chain is Anthranilate phosphoribosyltransferase (345 aa).

5-phospho-alpha-D-ribose 1-diphosphate is bound by residues Gly79, 82–83, Thr87, 89–92, 106–114, and Ser118; these read GD, NVST, and KHGNRAVSG. Position 79 (Gly79) interacts with anthranilate. Ser91 contacts Mg(2+). Asn109 contacts anthranilate. Arg164 is a binding site for anthranilate. Mg(2+) is bound by residues Asp223 and Glu224.

The protein belongs to the anthranilate phosphoribosyltransferase family. Homodimer. Requires Mg(2+) as cofactor.

The enzyme catalyses N-(5-phospho-beta-D-ribosyl)anthranilate + diphosphate = 5-phospho-alpha-D-ribose 1-diphosphate + anthranilate. It participates in amino-acid biosynthesis; L-tryptophan biosynthesis; L-tryptophan from chorismate: step 2/5. In terms of biological role, catalyzes the transfer of the phosphoribosyl group of 5-phosphorylribose-1-pyrophosphate (PRPP) to anthranilate to yield N-(5'-phosphoribosyl)-anthranilate (PRA). The polypeptide is Anthranilate phosphoribosyltransferase (Saccharolobus islandicus (strain M.14.25 / Kamchatka #1) (Sulfolobus islandicus)).